The primary structure comprises 441 residues: Heat shock factor protein 4 (441 aa).

Residues 17 to 121 (NVPAFLTKLW…EHLLEHIKRK (105 aa)) mediate DNA binding. The tract at residues 130-205 (TKVRQEDLSK…QMQSNSPSTV (76 aa)) is hydrophobic repeat HR-A/B.

Belongs to the HSF family. Predominantly expressed in the eye.

The protein resides in the nucleus. Heat-shock transcription factor that specifically binds heat shock promoter elements (HSE). Required for denucleation and organelle rupture and degradation that occur during eye lens terminal differentiation, when fiber cells that compose the lens degrade all membrane-bound organelles in order to provide lens with transparency to allow the passage of light. In this process, may regulate denucleation of lens fiber cells in part by activating dnase1l1l and dnase2b transcription. May be involved in DNA repair through the transcriptional regulation of rad51. May up-regulate TP53 protein in lens fiber cells, possibly through protein stabilization. In the eye lens, controls the expression of alpha-crystallin B chain/CRYAB and consequently may be involved in the regulation of lysosomal acidification. This chain is Heat shock factor protein 4, found in Danio rerio (Zebrafish).